The chain runs to 173 residues: Shikimate kinase (173 aa).

Position 14-19 (14-19 (GAGKST)) interacts with ATP. Mg(2+) is bound at residue serine 18. Substrate contacts are provided by aspartate 36, arginine 60, and glycine 82. Residue arginine 120 coordinates ATP. Arginine 139 serves as a coordination point for substrate. Glutamine 156 serves as a coordination point for ATP.

It belongs to the shikimate kinase family. In terms of assembly, monomer. Requires Mg(2+) as cofactor.

It localises to the cytoplasm. It carries out the reaction shikimate + ATP = 3-phosphoshikimate + ADP + H(+). Its pathway is metabolic intermediate biosynthesis; chorismate biosynthesis; chorismate from D-erythrose 4-phosphate and phosphoenolpyruvate: step 5/7. Catalyzes the specific phosphorylation of the 3-hydroxyl group of shikimic acid using ATP as a cosubstrate. The protein is Shikimate kinase of Actinobacillus pleuropneumoniae serotype 5b (strain L20).